A 378-amino-acid polypeptide reads, in one-letter code: Probable pectin lyase A (378 aa).

The N-terminal stretch at 1–19 is a signal peptide; it reads MKFPAFITAIISIASLSSA. Cystine bridges form between Cys-82-Cys-101 and Cys-91-Cys-225. Arg-255 is a catalytic residue. An intrachain disulfide couples Cys-321 to Cys-329.

The protein belongs to the polysaccharide lyase 1 family.

It localises to the secreted. The enzyme catalyses Eliminative cleavage of (1-&gt;4)-alpha-D-galacturonan methyl ester to give oligosaccharides with 4-deoxy-6-O-methyl-alpha-D-galact-4-enuronosyl groups at their non-reducing ends.. Functionally, pectinolytic enzymes consist of four classes of enzymes: pectin lyase, polygalacturonase, pectin methylesterase and rhamnogalacturonase. Among pectinolytic enzymes, pectin lyase is the most important in depolymerization of pectin, since it cleaves internal glycosidic bonds of highly methylated pectins. The polypeptide is Probable pectin lyase A (pelA) (Aspergillus terreus (strain NIH 2624 / FGSC A1156)).